Here is a 661-residue protein sequence, read N- to C-terminus: PAN2-PAN3 deadenylation complex subunit pan3 (661 aa).

Disordered regions lie at residues Met-1–Asp-29 and Asp-53–Ala-131. A C3H1-type zinc finger spans residues Asn-26 to His-55. The PABPC-interacting motif-2 (PAM-2) motif lies at Asn-63–Ser-83. The span at Thr-77–Lys-104 shows a compositional bias: low complexity. A compositionally biased stretch (polar residues) spans Thr-115–Gly-126. The segment at Gln-263–Ser-524 is pseudokinase domain. ATP-binding positions include Arg-315, Asp-364–Thr-371, and Ser-424–Lys-425. Residues Ser-525–Phe-563 are a coiled coil. The knob domain stretch occupies residues Ile-564–His-661.

The protein belongs to the protein kinase superfamily. PAN3 family. Homodimer. Forms a heterotrimer with a catalytic subunit pan2 to form the poly(a)-nuclease (PAN) deadenylation complex. Interacts (via PAM-2 motif) with poly(A)-binding protein pab1 (via PABC domain), conferring substrate specificity of the enzyme complex.

It localises to the cytoplasm. Its function is as follows. Regulatory subunit of the poly(A)-nuclease (PAN) deadenylation complex, one of two cytoplasmic mRNA deadenylases involved in mRNA turnover. PAN specifically shortens poly(A) tails of RNA and the activity is stimulated by poly(A)-binding protein pab1. PAN deadenylation is followed by rapid degradation of the shortened mRNA tails by the CCR4-NOT complex. Deadenylated mRNAs are then degraded by two alternative mechanisms, namely exosome-mediated 3'-5' exonucleolytic degradation, or deadenylation-dependent mRNA decaping and subsequent 5'-3' exonucleolytic degradation by XRN1. May also be involved in post-transcriptional maturation of mRNA poly(A) tails. pan3 acts as a positive regulator for PAN activity, recruiting the catalytic subunit pan2 to mRNA via its interaction with RNA and with pab1. This chain is PAN2-PAN3 deadenylation complex subunit pan3, found in Emericella nidulans (strain FGSC A4 / ATCC 38163 / CBS 112.46 / NRRL 194 / M139) (Aspergillus nidulans).